The primary structure comprises 237 residues: Large ribosomal subunit protein uL1 (237 aa).

It belongs to the universal ribosomal protein uL1 family. As to quaternary structure, part of the 50S ribosomal subunit.

Functionally, binds directly to 23S rRNA. The L1 stalk is quite mobile in the ribosome, and is involved in E site tRNA release. Its function is as follows. Protein L1 is also a translational repressor protein, it controls the translation of the L11 operon by binding to its mRNA. The polypeptide is Large ribosomal subunit protein uL1 (Chloroflexus aurantiacus (strain ATCC 29364 / DSM 637 / Y-400-fl)).